The following is a 250-amino-acid chain: 5'-nucleotidase SurE (250 aa).

A divalent metal cation-binding residues include aspartate 8, aspartate 9, serine 39, and asparagine 91.

The protein belongs to the SurE nucleotidase family. A divalent metal cation is required as a cofactor.

The protein resides in the cytoplasm. It catalyses the reaction a ribonucleoside 5'-phosphate + H2O = a ribonucleoside + phosphate. Its function is as follows. Nucleotidase that shows phosphatase activity on nucleoside 5'-monophosphates. The sequence is that of 5'-nucleotidase SurE from Leptospira borgpetersenii serovar Hardjo-bovis (strain L550).